The chain runs to 951 residues: MSFVIAAPEVIAAAATDLASLGSSISAANAAAAANTTALIAAGADEVSTAIAALFGAHGQAYQALSAQAQAFHAQFVQALTSGGGAYAAAEAAAVSPLLDPINEFFLANTGRPLIGNGANGAPGTGANGGDGGWLIGNGGAGGSGAAGVNGGAGGNGGAGGLIGNGGAGGAGGVASSGIGGSGGAGGNAMLFGAGGAGGAGGGVVALTGGAGGAGGAGGNAGLLFGAAGVGGAGGFTNGSALGGAGGAGGAGGLFATGGVGGSGGAGSSGGAGGAGGAGGLFGAGGTGGHGGFADSSFGGVGGAGGAGGLFGAGGEGGSGGHSLVAGGDGGAGGNAGMLALGAAGGAGGIGGDGGTLTAGGIGGAGGAGGNAGLLFGSGGSGGAGGFGFADGGQGGPGGNAGTVFGSGGAGGNGGVGQGFAGGIGGAGGTPGLIGNGGNGGNGGASAVTGGNGGIGGTGVLIGNGGNGGSGGIGAGKAGVGGVSGLLLGLDGFNAPASTSPLHTLQQNVLNVVNEPFQTLTGRPLIGNGANGTPGTGADGGAGGWLFGNGANGTPGTGAAGGAGGWLFGNGGNGGHGATNTAATATGGAGGAGGILFGTGGNGGTGGIATGAGGIGGAGGAGGVSLLIGSGGTGGNGGNSIGVAGIGGAGGRGGDAGLLFGAAGTGGHGAAGGVPAGVGGAGGNGGLFANGGAGGAGGFNAAGGNGGNGGLFGTGGTGGAGTNFGAGGNGGNGGLFGAGGTGGAAGSGGSGITTGGGGHGGNAGLLSLGASGGAGGSGGASSLAGGAGGTGGNGALLFGFGGAGGAGGHGGAALTSIQQGGAGGAGGNGGLLFGSAGAGGAGGSGANALGAGTGGTGGDGGHAGVFGNGGDGGCRRVWRRYRRQRWCRRQRRADRQRRQRRQRRQSRGHARCRRHRRAAARRERTQRLAIAGRPATTRGVEGISCSPQMMP.

The PE domain maps to valine 4 to alanine 94. The span at cysteine 887–alanine 919 shows a compositional bias: basic residues. The disordered stretch occupies residues cysteine 887–proline 951.

This sequence belongs to the mycobacterial PE family. PGRS subfamily.

The protein resides in the cell outer membrane. Its subcellular location is the secreted. It localises to the cell wall. The protein localises to the cell surface. Its function is as follows. The arginine-rich C-terminal region protrudes from the mycobacterial membrane and mediates M.tuberculosis entry into host epithelial cells. May serve as a bridge between mycobacteria and host cells by interacting with specific host phospholipids and extracting them from host cells, for their direct integration or as a source of phosphate, during phases of TB pathogenesis when M.tuberculosis is short of phosphate supply. This is PE-PGRS family protein PE_PGRS3 (PE_PGRS3) from Mycobacterium tuberculosis (strain CDC 1551 / Oshkosh).